The primary structure comprises 130 residues: Small ribosomal subunit protein uS9 (130 aa).

It belongs to the universal ribosomal protein uS9 family. In terms of assembly, part of the 30S ribosomal subunit.

This is Small ribosomal subunit protein uS9 (rpsI) from Bacillus subtilis (strain 168).